We begin with the raw amino-acid sequence, 283 residues long: Pantothenate synthetase (283 aa).

31–38 (MGALHDGH) serves as a coordination point for ATP. The active-site Proton donor is the H38. Q62 lines the (R)-pantoate pocket. Residue Q62 coordinates beta-alanine. 148-151 (GKKD) contributes to the ATP binding site. Residue Q154 coordinates (R)-pantoate. ATP is bound by residues V177 and 185–188 (KSSR).

The protein belongs to the pantothenate synthetase family. As to quaternary structure, homodimer.

The protein resides in the cytoplasm. The catalysed reaction is (R)-pantoate + beta-alanine + ATP = (R)-pantothenate + AMP + diphosphate + H(+). It functions in the pathway cofactor biosynthesis; (R)-pantothenate biosynthesis; (R)-pantothenate from (R)-pantoate and beta-alanine: step 1/1. Its function is as follows. Catalyzes the condensation of pantoate with beta-alanine in an ATP-dependent reaction via a pantoyl-adenylate intermediate. The sequence is that of Pantothenate synthetase from Staphylococcus aureus (strain bovine RF122 / ET3-1).